Consider the following 506-residue polypeptide: Beta-glucosidase 9 (506 aa).

An N-terminal signal peptide occupies residues 1–22; that stretch reads MKHFSLLFIFLVILLATSYSDA. A beta-D-glucoside-binding positions include glutamine 42, histidine 139, and 184–185; that span reads NE. Glutamate 185 serves as the catalytic Proton donor. Residues cysteine 204 and cysteine 212 are joined by a disulfide bond. N-linked (GlcNAc...) asparagine glycosylation is found at asparagine 211 and asparagine 216. Tyrosine 328 contacts a beta-D-glucoside. N-linked (GlcNAc...) asparagine glycosylation is present at asparagine 363. Residue glutamate 396 participates in a beta-D-glucoside binding. The Nucleophile role is filled by glutamate 396. An N-linked (GlcNAc...) asparagine glycan is attached at asparagine 429. Positions 439 and 455 each coordinate a beta-D-glucoside. Residues asparagine 461, asparagine 483, and asparagine 499 are each glycosylated (N-linked (GlcNAc...) asparagine).

It belongs to the glycosyl hydrolase 1 family.

It catalyses the reaction Hydrolysis of terminal, non-reducing beta-D-glucosyl residues with release of beta-D-glucose.. The chain is Beta-glucosidase 9 from Arabidopsis thaliana (Mouse-ear cress).